A 175-amino-acid polypeptide reads, in one-letter code: NADH-ubiquinone oxidoreductase chain 6 (175 aa).

The next 5 membrane-spanning stretches (helical) occupy residues Met-1–Ser-21, Ser-24–Val-44, Phe-46–Val-66, Ile-86–Leu-106, and Tyr-149–Ile-169.

The protein belongs to the complex I subunit 6 family. As to quaternary structure, core subunit of respiratory chain NADH dehydrogenase (Complex I) which is composed of 45 different subunits.

It is found in the mitochondrion inner membrane. The catalysed reaction is a ubiquinone + NADH + 5 H(+)(in) = a ubiquinol + NAD(+) + 4 H(+)(out). Core subunit of the mitochondrial membrane respiratory chain NADH dehydrogenase (Complex I) which catalyzes electron transfer from NADH through the respiratory chain, using ubiquinone as an electron acceptor. Essential for the catalytic activity and assembly of complex I. The polypeptide is NADH-ubiquinone oxidoreductase chain 6 (MT-ND6) (Dugong dugon (Dugong)).